Reading from the N-terminus, the 212-residue chain is Lipid A acyltransferase PagP (212 aa).

Residues 1-24 (MYLKRTLITLSLITLPIVPFLSYA) form the signal peptide. Residues 36 to 47 (NLAPVTVDSSDP) are compositionally biased toward polar residues. The interval 36-56 (NLAPVTVDSSDPVSDKQGESW) is disordered. Catalysis depends on residues His-84, Asp-127, and Ser-128.

The protein belongs to the lipid A palmitoyltransferase family. In terms of assembly, homodimer.

It localises to the cell outer membrane. The enzyme catalyses a lipid A + a 1,2-diacyl-sn-glycero-3-phosphocholine = a hepta-acyl lipid A + a 2-acyl-sn-glycero-3-phosphocholine. It carries out the reaction a lipid IVA + a 1,2-diacyl-sn-glycero-3-phosphocholine = a lipid IVB + a 2-acyl-sn-glycero-3-phosphocholine. It catalyses the reaction a lipid IIA + a 1,2-diacyl-sn-glycero-3-phosphocholine = a lipid IIB + a 2-acyl-sn-glycero-3-phosphocholine. Transfers a fatty acid residue from the sn-1 position of a phospholipid to the N-linked hydroxyfatty acid chain on the proximal unit of lipid A or its precursors. In Pectobacterium carotovorum subsp. carotovorum (strain PC1), this protein is Lipid A acyltransferase PagP.